Here is a 296-residue protein sequence, read N- to C-terminus: Cutinase est1 (296 aa).

Residues 1 to 35 (MSVTTPRREASLLSRAVAVAAAAAATVALAAPAQA) form the signal peptide. A disordered region spans residues 36-57 (ANPYERGPNPTESMLEARSGPF). Poly(ethylene terephthalate) is bound at residue Tyr95. The active-site Nucleophile is the Ser165. Residues Met166 and Trp190 each contribute to the poly(ethylene terephthalate) site. Catalysis depends on charge relay system residues Asp211 and His243. An intrachain disulfide couples Cys276 to Cys294.

This sequence belongs to the AB hydrolase superfamily. In terms of assembly, monomer.

The protein localises to the secreted. It localises to the periplasm. It catalyses the reaction (ethylene terephthalate)(n) + H2O = (ethylene terephthalate)(n-1) + 4-[(2-hydroxyethoxy)carbonyl]benzoate + H(+). The enzyme catalyses a butanoate ester + H2O = an aliphatic alcohol + butanoate + H(+). It carries out the reaction cutin + H2O = cutin monomers.. Functionally, catalyzes the hydrolysis of cutin, a polyester that forms the structure of plant cuticle. Shows esterase activity towards p-nitrophenol-linked aliphatic esters (pNP-aliphatic esters). Capable of degrading the plastic poly(ethylene terephthalate) (PET), the most abundant polyester plastic in the world. Can also depolymerize the synthetic polyester poly(epsilon-caprolactone) (PCL). The chain is Cutinase est1 from Thermobifida alba (Thermomonospora alba).